We begin with the raw amino-acid sequence, 78 residues long: uncharacterized protein (78 aa).

Residues 56-66 are compositionally biased toward basic and acidic residues; sequence ERANAGKRVSE. The tract at residues 56-78 is disordered; that stretch reads ERANAGKRVSEEEQINGKRKRKD.

This is an uncharacterized protein from Saccharomyces cerevisiae (strain ATCC 204508 / S288c) (Baker's yeast).